The chain runs to 553 residues: Ergothioneine transport permease/ergothioneine binding protein EgtU (553 aa).

Positions 57 to 236 constitute an ABC transmembrane type-1 domain; sequence LAQHFIIVAL…LFSVLADKFV (180 aa). 6 consecutive transmembrane segments (helical) span residues 61 to 81, 98 to 118, 122 to 142, 182 to 202, 219 to 239, and 261 to 281; these read FIIV…IGVF, FLYT…IGVG, ALLV…YNAL, IAVV…AGGL, VAGS…VSVF, and VYTN…WLIP. Residues 282–553 lie on the Periplasmic side of the membrane; that stretch reads RNAIEEKPLV…AKDFLERLGL (272 aa). The interval 288–549 is ergothioneine binding domain; it reads KPLVVATKPS…PKIVAKDFLE (262 aa).

It in the N-terminal section; belongs to the binding-protein-dependent transport system permease family. The protein in the C-terminal section; belongs to the OsmX family. The complex is composed of two ATP-binding proteins (EgtV) and two transmembrane proteins (EgtU).

It localises to the cell inner membrane. Part of the ABC transporter complex EgtUV involved in the uptake of ergothioneine (EGT), a natural low-molecular weight (LMW) thiol antioxidant which protects H.pylori against bleach stress. Responsible for the translocation of the substrate across the membrane. Also contains a C-terminal periplasmic solute-binding domain (SBD) which binds to ergothioneine with low-micromolar affinity. Cannot bind the structurally similar compounds glycine betaine, choline, proline, carnitine or histidine. The sequence is that of Ergothioneine transport permease/ergothioneine binding protein EgtU from Helicobacter pylori (strain G27).